Here is a 201-residue protein sequence, read N- to C-terminus: 3-isopropylmalate dehydratase small subunit (201 aa).

It belongs to the LeuD family. LeuD type 1 subfamily. Heterodimer of LeuC and LeuD.

It carries out the reaction (2R,3S)-3-isopropylmalate = (2S)-2-isopropylmalate. It functions in the pathway amino-acid biosynthesis; L-leucine biosynthesis; L-leucine from 3-methyl-2-oxobutanoate: step 2/4. Functionally, catalyzes the isomerization between 2-isopropylmalate and 3-isopropylmalate, via the formation of 2-isopropylmaleate. The protein is 3-isopropylmalate dehydratase small subunit of Cytophaga hutchinsonii (strain ATCC 33406 / DSM 1761 / CIP 103989 / NBRC 15051 / NCIMB 9469 / D465).